The chain runs to 117 residues: Immunoglobulin kappa variable 1-16 (117 aa).

A signal peptide spans 1–22; the sequence is MDMRVLAQLLGLLLLCFPGARC. The tract at residues 23-45 is framework-1; that stretch reads DIQMTQSPSSLSASVGDRVTITC. The Ig-like domain maps to 24–117; that stretch reads IQMTQSPSSL…YYCQQYNSYP (94 aa). C45 and C110 are joined by a disulfide. A complementarity-determining-1 region spans residues 46–56; the sequence is RASQGISNYLA. Residues 57–71 are framework-2; it reads WFQQKPGKAPKSLIY. The tract at residues 72 to 78 is complementarity-determining-2; it reads AASSLQS. The interval 79–110 is framework-3; sequence GVPSKFSGSGSGTDFTLTISSLQPEDFATYYC. Residues 111 to 117 are complementarity-determining-3; sequence QQYNSYP.

In terms of assembly, immunoglobulins are composed of two identical heavy chains and two identical light chains; disulfide-linked.

The protein localises to the secreted. Its subcellular location is the cell membrane. Its function is as follows. V region of the variable domain of immunoglobulin light chains that participates in the antigen recognition. Immunoglobulins, also known as antibodies, are membrane-bound or secreted glycoproteins produced by B lymphocytes. In the recognition phase of humoral immunity, the membrane-bound immunoglobulins serve as receptors which, upon binding of a specific antigen, trigger the clonal expansion and differentiation of B lymphocytes into immunoglobulins-secreting plasma cells. Secreted immunoglobulins mediate the effector phase of humoral immunity, which results in the elimination of bound antigens. The antigen binding site is formed by the variable domain of one heavy chain, together with that of its associated light chain. Thus, each immunoglobulin has two antigen binding sites with remarkable affinity for a particular antigen. The variable domains are assembled by a process called V-(D)-J rearrangement and can then be subjected to somatic hypermutations which, after exposure to antigen and selection, allow affinity maturation for a particular antigen. The chain is Immunoglobulin kappa variable 1-16 from Homo sapiens (Human).